Here is a 1047-residue protein sequence, read N- to C-terminus: Error-prone DNA polymerase (1047 aa).

The protein belongs to the DNA polymerase type-C family. DnaE2 subfamily.

The protein localises to the cytoplasm. It catalyses the reaction DNA(n) + a 2'-deoxyribonucleoside 5'-triphosphate = DNA(n+1) + diphosphate. DNA polymerase involved in damage-induced mutagenesis and translesion synthesis (TLS). It is not the major replicative DNA polymerase. The protein is Error-prone DNA polymerase of Methylococcus capsulatus (strain ATCC 33009 / NCIMB 11132 / Bath).